We begin with the raw amino-acid sequence, 307 residues long: Ribosomal RNA small subunit methyltransferase H (307 aa).

S-adenosyl-L-methionine is bound by residues 32–34 (GGH), aspartate 52, phenylalanine 78, aspartate 99, and glutamine 106. The segment at 287-307 (KEEIESNKRSHSAKLRVAEKV) is disordered.

Belongs to the methyltransferase superfamily. RsmH family.

It localises to the cytoplasm. It carries out the reaction cytidine(1402) in 16S rRNA + S-adenosyl-L-methionine = N(4)-methylcytidine(1402) in 16S rRNA + S-adenosyl-L-homocysteine + H(+). Specifically methylates the N4 position of cytidine in position 1402 (C1402) of 16S rRNA. This is Ribosomal RNA small subunit methyltransferase H from Caldicellulosiruptor bescii (strain ATCC BAA-1888 / DSM 6725 / KCTC 15123 / Z-1320) (Anaerocellum thermophilum).